Consider the following 337-residue polypeptide: Quinolinate synthase (337 aa).

Residues H40 and S57 each contribute to the iminosuccinate site. C102 serves as a coordination point for [4Fe-4S] cluster. Iminosuccinate contacts are provided by residues 128–130 (YVN) and S145. Residue C189 participates in [4Fe-4S] cluster binding. Iminosuccinate contacts are provided by residues 215-217 (HPE) and T243. A [4Fe-4S] cluster-binding site is contributed by C288.

The protein belongs to the quinolinate synthase family. Type 2 subfamily. The cofactor is [4Fe-4S] cluster.

The protein localises to the cytoplasm. It catalyses the reaction iminosuccinate + dihydroxyacetone phosphate = quinolinate + phosphate + 2 H2O + H(+). It participates in cofactor biosynthesis; NAD(+) biosynthesis; quinolinate from iminoaspartate: step 1/1. Its function is as follows. Catalyzes the condensation of iminoaspartate with dihydroxyacetone phosphate to form quinolinate. In Mycobacterium sp. (strain JLS), this protein is Quinolinate synthase.